Reading from the N-terminus, the 569-residue chain is Urease subunit alpha (569 aa).

A Urease domain is found at 131-569 (GGMDAHIHYI…LPMAQRYFLF (439 aa)). 3 residues coordinate Ni(2+): His136, His138, and Lys218. The residue at position 218 (Lys218) is an N6-carboxylysine. Residue His220 coordinates substrate. Ni(2+) is bound by residues His247 and His273. His321 serves as the catalytic Proton donor. A Ni(2+)-binding site is contributed by Asp361.

This sequence belongs to the metallo-dependent hydrolases superfamily. Urease alpha subunit family. In terms of assembly, heterotrimer of UreA (gamma), UreB (beta) and UreC (alpha) subunits. Three heterotrimers associate to form the active enzyme. Requires Ni cation as cofactor. In terms of processing, carboxylation allows a single lysine to coordinate two nickel ions.

The protein resides in the cytoplasm. It carries out the reaction urea + 2 H2O + H(+) = hydrogencarbonate + 2 NH4(+). It functions in the pathway nitrogen metabolism; urea degradation; CO(2) and NH(3) from urea (urease route): step 1/1. This chain is Urease subunit alpha, found in Agrobacterium fabrum (strain C58 / ATCC 33970) (Agrobacterium tumefaciens (strain C58)).